A 391-amino-acid polypeptide reads, in one-letter code: Cytochrome P450 165A3 (391 aa).

The disordered stretch occupies residues 1–22 (MFEEKNALRGTEIHRRERFDPG). Cys-342 is a binding site for heme.

The protein belongs to the cytochrome P450 family. The cofactor is heme.

It functions in the pathway antibiotic biosynthesis; vancomycin biosynthesis. Involved in the coupling of aromatic side chains of the heptapeptide of vancomycin. In Amycolatopsis orientalis (Nocardia orientalis), this protein is Cytochrome P450 165A3 (cyp165A3).